Consider the following 986-residue polypeptide: Regulator of telomere elongation helicase 1 homolog (986 aa).

One can recognise a Helicase ATP-binding domain in the interval 7–326 (AGIPVHFPFE…KEMLLELEKA (320 aa)). Residue 42 to 49 (SPTGTGKT) participates in ATP binding. [4Fe-4S] cluster is bound by residues Cys148, Cys166, Cys175, and Cys211. The DEAH box signature appears at 254–257 (DEGH). A Phosphothreonine modification is found at Thr875.

This sequence belongs to the helicase family. RAD3/XPD subfamily.

It is found in the nucleus. It carries out the reaction ATP + H2O = ADP + phosphate + H(+). Functionally, a probable ATP-dependent DNA helicase implicated in DNA repair and the maintenance of genomic stability. Acts as an anti-recombinase to counteract toxic recombination and limit crossover during meiosis. Regulates meiotic recombination and crossover homeostasis by physically dissociating strand invasion events and thereby promotes noncrossover repair by meiotic synthesis dependent strand annealing (SDSA) as well as disassembly of D loop recombination intermediates. In Drosophila grimshawi (Hawaiian fruit fly), this protein is Regulator of telomere elongation helicase 1 homolog.